The following is a 377-amino-acid chain: 3-dehydroquinate synthase (377 aa).

Residues 115–119 (GVIGD), 139–140 (TS), K152, and K162 each bind NAD(+). Positions 195, 257, and 276 each coordinate Zn(2+).

Belongs to the sugar phosphate cyclases superfamily. Dehydroquinate synthase family. Co(2+) serves as cofactor. The cofactor is Zn(2+). NAD(+) is required as a cofactor.

It is found in the cytoplasm. It carries out the reaction 7-phospho-2-dehydro-3-deoxy-D-arabino-heptonate = 3-dehydroquinate + phosphate. It participates in metabolic intermediate biosynthesis; chorismate biosynthesis; chorismate from D-erythrose 4-phosphate and phosphoenolpyruvate: step 2/7. Its function is as follows. Catalyzes the conversion of 3-deoxy-D-arabino-heptulosonate 7-phosphate (DAHP) to dehydroquinate (DHQ). This Rhizobium etli (strain ATCC 51251 / DSM 11541 / JCM 21823 / NBRC 15573 / CFN 42) protein is 3-dehydroquinate synthase.